A 209-amino-acid polypeptide reads, in one-letter code: 3-demethoxyubiquinol 3-hydroxylase (209 aa).

Positions 58, 88, 91, 140, 172, and 175 each coordinate Fe cation.

Belongs to the COQ7 family. Fe cation serves as cofactor.

The protein resides in the cell membrane. The enzyme catalyses a 5-methoxy-2-methyl-3-(all-trans-polyprenyl)benzene-1,4-diol + AH2 + O2 = a 3-demethylubiquinol + A + H2O. Its pathway is cofactor biosynthesis; ubiquinone biosynthesis. Catalyzes the hydroxylation of 2-nonaprenyl-3-methyl-6-methoxy-1,4-benzoquinol during ubiquinone biosynthesis. In Polynucleobacter asymbioticus (strain DSM 18221 / CIP 109841 / QLW-P1DMWA-1) (Polynucleobacter necessarius subsp. asymbioticus), this protein is 3-demethoxyubiquinol 3-hydroxylase.